A 463-amino-acid polypeptide reads, in one-letter code: Kynurenine 3-monooxygenase (463 aa).

The protein belongs to the aromatic-ring hydroxylase family. KMO subfamily. FAD serves as cofactor.

It is found in the mitochondrion outer membrane. It catalyses the reaction L-kynurenine + NADPH + O2 + H(+) = 3-hydroxy-L-kynurenine + NADP(+) + H2O. It participates in cofactor biosynthesis; NAD(+) biosynthesis; quinolinate from L-kynurenine: step 1/3. In terms of biological role, catalyzes the hydroxylation of L-kynurenine (L-Kyn) to form 3-hydroxy-L-kynurenine (L-3OHKyn). Required for synthesis of quinolinic acid. This is Kynurenine 3-monooxygenase from Yarrowia lipolytica (strain CLIB 122 / E 150) (Yeast).